The following is a 73-amino-acid chain: Translation initiation factor IF-1 3 (73 aa).

Positions 1–72 constitute an S1-like domain; it reads MAKEELVEFG…TKGRINYRHK (72 aa).

Belongs to the IF-1 family. Component of the 30S ribosomal translation pre-initiation complex which assembles on the 30S ribosome in the order IF-2 and IF-3, IF-1 and N-formylmethionyl-tRNA(fMet); mRNA recruitment can occur at any time during PIC assembly.

The protein localises to the cytoplasm. In terms of biological role, one of the essential components for the initiation of protein synthesis. Stabilizes the binding of IF-2 and IF-3 on the 30S subunit to which N-formylmethionyl-tRNA(fMet) subsequently binds. Helps modulate mRNA selection, yielding the 30S pre-initiation complex (PIC). Upon addition of the 50S ribosomal subunit IF-1, IF-2 and IF-3 are released leaving the mature 70S translation initiation complex. In Cupriavidus pinatubonensis (strain JMP 134 / LMG 1197) (Cupriavidus necator (strain JMP 134)), this protein is Translation initiation factor IF-1 3.